A 365-amino-acid chain; its full sequence is MSEDMEFENWGSTQSSVEKFCYKWTISNFSFCMGGIQRRITSPVFSSEENKEVAWCLRVYPKGADKESKDYLSVYLVLLSHLQSPVWAKFKFWIINSQGEKYQKTKSPIVECFLTYEQSGFKKFLPRDLLLSHRNCLLPEDQLTICCKVTILGRKYNMPSQNITPAIKDPRHLLTDDLGELWENSLFTDCCLLVAGHEFRAHKAILAARSPVFRAMFEHEMKESLKTPIKIHNLNPQVFKEMMSFIYTGKAPYLHSHSMACDVLPAADKYGLVSLKVLCEDAFCRNLSVKNATHTLILADLHSTEKLKTQALDFIAYYASEVCETSEWKSMVESHPHLVAEAFQSLASAQCSFLEPKVISGSNQL.

An MATH domain is found at 19-149 (KFCYKWTISN…EDQLTICCKV (131 aa)). The BTB domain occupies 188–255 (TDCCLLVAGH…IYTGKAPYLH (68 aa)).

Belongs to the Tdpoz family.

The sequence is that of TD and POZ domain-containing protein 1-like from Mus musculus (Mouse).